Consider the following 299-residue polypeptide: Oxygen-dependent coproporphyrinogen-III oxidase (299 aa).

A substrate-binding site is contributed by S92. Residues H96 and H106 each coordinate a divalent metal cation. Catalysis depends on H106, which acts as the Proton donor. 108–110 (NVR) is a binding site for substrate. Residues H145 and H175 each contribute to the a divalent metal cation site. Residues 240-275 (YVEFNLVWDRGTLFGLQTGGRTESILMSMPPLVRWE) are important for dimerization. 258–260 (GGR) is a binding site for substrate.

Belongs to the aerobic coproporphyrinogen-III oxidase family. Homodimer. A divalent metal cation serves as cofactor.

The protein resides in the cytoplasm. The catalysed reaction is coproporphyrinogen III + O2 + 2 H(+) = protoporphyrinogen IX + 2 CO2 + 2 H2O. It functions in the pathway porphyrin-containing compound metabolism; protoporphyrin-IX biosynthesis; protoporphyrinogen-IX from coproporphyrinogen-III (O2 route): step 1/1. Functionally, involved in the heme biosynthesis. Catalyzes the aerobic oxidative decarboxylation of propionate groups of rings A and B of coproporphyrinogen-III to yield the vinyl groups in protoporphyrinogen-IX. This Salmonella newport (strain SL254) protein is Oxygen-dependent coproporphyrinogen-III oxidase.